The following is a 187-amino-acid chain: PBAN-type neuropeptides (187 aa).

The first 22 residues, 1-22 (MSRFYFFFNLICLYLAIKSALS), serve as a signal peptide directing secretion. Residues 23 to 64 (AELDTNDQKYADLRTTGRGESPDSTGPDSDTLRRDDGAEGLN) constitute a propeptide that is removed on maturation. Residues 34–43 (DLRTTGRGES) are compositionally biased toward basic and acidic residues. Positions 34–58 (DLRTTGRGESPDSTGPDSDTLRRDD) are disordered. Leucine amide is present on Leu-76. The propeptide occupies 80–127 (TIAADLHDDLVEEFDAEPLGYAGEPPQKLATELVQGAPYMVLLVTAKP). A disordered region spans residues 132–163 (PIFYHTTSPRLGRRDSVGENHQRPPFAPRLGR). Leu-142 carries the post-translational modification Leucine amide. The span at 143 to 153 (GRRDSVGENHQ) shows a compositional bias: basic and acidic residues. Residues Leu-161 and Leu-171 each carry the leucine amide modification. Residues 174–187 (SYNGGYPLPFQFAY) constitute a propeptide that is removed on maturation.

The protein belongs to the pyrokinin family.

It localises to the secreted. Functionally, a hormone that controls sex pheromone production in females and pheromone responsiveness in male. Also mediates visceral muscle contractile activity (myotropic activity). The protein is PBAN-type neuropeptides of Anopheles gambiae (African malaria mosquito).